Reading from the N-terminus, the 499-residue chain is Sensor histidine kinase VxrA (499 aa).

Residues 1–12 (MRYSFCMLEKTN) lie on the Cytoplasmic side of the membrane. The chain crosses the membrane as a helical span at residues 13 to 31 (IPLIRALNLTLVSLCFAML). Over 32–257 (PNPVHADSLP…ICWDVEDHSD (226 aa)) the chain is Periplasmic. 2 disulfides stabilise this stretch: cysteine 101-cysteine 122 and cysteine 241-cysteine 249. A helical membrane pass occupies residues 258-280 (LLRTSMIILVIANIFLVLGWSGY). Residues 281–499 (RWNSKRQEMR…IPCETDTASR (219 aa)) lie on the Cytoplasmic side of the membrane. Positions 298-494 (ILTHELRTPI…TFILEIPCET (197 aa)) constitute a Histidine kinase domain. Histidine 301 is modified (phosphohistidine; by autocatalysis).

Homodimer. In terms of processing, autophosphorylated. Contains two disulfide bonds that may play a role in the stability of the protein. However, the disulfide bonds are not absolutely essential, as some activity and growth are detected in the absence of each disulfide bond.

The protein resides in the cell inner membrane. It carries out the reaction ATP + protein L-histidine = ADP + protein N-phospho-L-histidine.. Its function is as follows. Member of the two-component regulatory system VxrB/VxrA involved in the regulation of diverses processes, including virulence, the type VI secretion system (T6SS) and biofilm formation. Functions as a sensor protein kinase which is autophosphorylated at a histidine residue and transfers its phosphate group to the conserved aspartic acid residue in the regulatory domain of VxrB. Is critical for colonization in the infant mouse model. Contributes to the resistance to beta-lactam treatment. In Vibrio cholerae serotype O1 (strain ATCC 39315 / El Tor Inaba N16961), this protein is Sensor histidine kinase VxrA.